The following is a 254-amino-acid chain: 21S rRNA pseudouridine(2819) synthase (254 aa).

Asp-71 is an active-site residue.

It belongs to the pseudouridine synthase RluA family.

It localises to the mitochondrion. The enzyme catalyses uridine(2819) in 21S rRNA = pseudouridine(2819) in 21S rRNA. Its function is as follows. Pseudouridylate synthase responsible for the pseudouridine-2819 formation in mitochondrial 21S rRNA. May modulate the efficiency or the fidelity of the mitochondrial translation machinery. This chain is 21S rRNA pseudouridine(2819) synthase (PUS5), found in Saccharomyces cerevisiae (strain ATCC 204508 / S288c) (Baker's yeast).